The following is a 247-amino-acid chain: Adenosylcobinamide-GDP ribazoletransferase (247 aa).

5 helical membrane-spanning segments follow: residues 34-54, 59-79, 113-133, 138-158, and 194-214; these read IITFPLIGLLLGAISGLVFMV, CGAPLAALFSVLVLVLMTGGF, GGLALIFVVLAKILVLSELAL, ILASLAAACAVSRGTAALLMY, and VLLPGMHGVAAMVVTMVAIFI.

The protein belongs to the CobS family. It depends on Mg(2+) as a cofactor.

It localises to the cell inner membrane. It carries out the reaction alpha-ribazole + adenosylcob(III)inamide-GDP = adenosylcob(III)alamin + GMP + H(+). The enzyme catalyses alpha-ribazole 5'-phosphate + adenosylcob(III)inamide-GDP = adenosylcob(III)alamin 5'-phosphate + GMP + H(+). Its pathway is cofactor biosynthesis; adenosylcobalamin biosynthesis; adenosylcobalamin from cob(II)yrinate a,c-diamide: step 7/7. Joins adenosylcobinamide-GDP and alpha-ribazole to generate adenosylcobalamin (Ado-cobalamin). Also synthesizes adenosylcobalamin 5'-phosphate from adenosylcobinamide-GDP and alpha-ribazole 5'-phosphate. The chain is Adenosylcobinamide-GDP ribazoletransferase from Escherichia coli O81 (strain ED1a).